The primary structure comprises 296 residues: Solute carrier protein FPSE_08119 (296 aa).

Transmembrane regions (helical) follow at residues 12-32 (GLAA…GMVA), 122-142 (AGVG…VILI), and 219-239 (AVAA…FDFV). Solcar repeat units lie at residues 16–102 (LQTA…FEKE), 114–205 (LSFG…AKNQ), and 213–296 (SPPV…GPHS).

Belongs to the mitochondrial carrier (TC 2.A.29) family.

Its subcellular location is the mitochondrion inner membrane. Its function is as follows. Solute carrier protein; part of the Fusarium detoxification of benzoxazolinone cluster involved in the degradation of benzoxazolinones produced by the host plant. Maize, wheat, and rye produce the 2 benzoxazinone phytoanticipins 2,4-dihy-droxy-7-methoxy-1,4-benzoxazin-3-one (DIMBOA) and 2,4-dihydroxy-1,4-benzoxazin-3-one (DIBOA) that, due to their inherent instability once released, spontaneously degrade to the more stable corresponding benzoxazolinones, 6-methoxy-2-benzoxazolinone (MBOA) and 2-benzoxazolinone (BOA), respectively. This chain is Solute carrier protein FPSE_08119, found in Fusarium pseudograminearum (strain CS3096) (Wheat and barley crown-rot fungus).